Reading from the N-terminus, the 125-residue chain is MTEVMQVYKCMVCGNIVEVVHAGRGQLVCCGQPMKLMEVKTTDEGKEKHVPVIEREGNKVYVKVGSVAHPMEEQHYIEWIEVIDDGCVHRKQLKPGDEPKAEFTVMSDRVSARAYCNIHGLWQSG.

Positions 10, 13, 29, 30, 49, 69, 75, 116, and 119 each coordinate Fe cation.

The protein belongs to the desulfoferrodoxin family. Requires Fe(3+) as cofactor. Cu(2+) is required as a cofactor.

In Archaeoglobus fulgidus (strain ATCC 49558 / DSM 4304 / JCM 9628 / NBRC 100126 / VC-16), this protein is Desulfoferrodoxin homolog.